The following is a 492-amino-acid chain: Diacylglycerol kinase 7 (492 aa).

Residues 90 to 248 enclose the DAGKc domain; sequence APHAPMVVFI…SWKIVVSMPS (159 aa).

It belongs to the eukaryotic diacylglycerol kinase family. Monomer. Highly expressed in flowers, and at low levels in roots, stems and leaves.

It catalyses the reaction a 1,2-diacyl-sn-glycerol + ATP = a 1,2-diacyl-sn-glycero-3-phosphate + ADP + H(+). In terms of biological role, phosphorylates the second messenger diacylglycerol (DAG) to generate phosphatidic acid (PA), another important signaling molecule. PA is required for plant development and responses to abiotic stress and pathogen attack. May be involved in the accumulation of PA during cold stress xhibits high specificity for 1,2-dioleoyl-sn-glycerol (1,2-DOG), 1-palmitoyl, 2-oleoyl-sn-glycerol (1,2 POG), 1-stearoyl, 2-linoleoyl-sn-glycerol (1,2-SLG) and 1-oleoyl, 2-palmitoyl-sn-glycerol (1,2-OPG). This is Diacylglycerol kinase 7 (DGK7) from Arabidopsis thaliana (Mouse-ear cress).